The primary structure comprises 618 residues: 1-deoxy-D-xylulose-5-phosphate synthase (618 aa).

Thiamine diphosphate is bound by residues H70 and G111–S113. A Mg(2+)-binding site is contributed by D142. Thiamine diphosphate contacts are provided by residues G143–S144, N171, Y278, and E360. N171 is a binding site for Mg(2+).

Belongs to the transketolase family. DXPS subfamily. Homodimer. Mg(2+) serves as cofactor. It depends on thiamine diphosphate as a cofactor.

The enzyme catalyses D-glyceraldehyde 3-phosphate + pyruvate + H(+) = 1-deoxy-D-xylulose 5-phosphate + CO2. Its pathway is metabolic intermediate biosynthesis; 1-deoxy-D-xylulose 5-phosphate biosynthesis; 1-deoxy-D-xylulose 5-phosphate from D-glyceraldehyde 3-phosphate and pyruvate: step 1/1. In terms of biological role, catalyzes the acyloin condensation reaction between C atoms 2 and 3 of pyruvate and glyceraldehyde 3-phosphate to yield 1-deoxy-D-xylulose-5-phosphate (DXP). The polypeptide is 1-deoxy-D-xylulose-5-phosphate synthase (Helicobacter pylori (strain G27)).